The primary structure comprises 127 residues: Interacting with cytoskeleton protein 1 (127 aa).

Its subcellular location is the vacuole membrane. Required for viability of cells lacking mtDNA. The polypeptide is Interacting with cytoskeleton protein 1 (ICY1) (Saccharomyces cerevisiae (strain ATCC 204508 / S288c) (Baker's yeast)).